The chain runs to 274 residues: MEIEVKSQTDDEIVFIVRDAEVPFINAIRRCAMVNVPKIAIEDVNIMRNDSAMFNEVLAHRLGLTPLVSNMDAIEGLPLPGDDDYEENNSVMFSLKEEGPKVVYSKDLISSDSKIKPVYDTIPLVKLKEGEKLNIEAVAKVGYGKEHAKWMPTTVCVYKQYPEITFNEDVGIDYECADACPRGVLKSDKRSKEIKILDIEDCAMCKSCVRASIRNAQSEGKDESYINVGYHENDFIFRIETDGSMPPKEVLLQACDELGEKADKFIRFSEGGSK.

Residues Cys202, Cys205, and Cys208 each coordinate [3Fe-4S] cluster.

This sequence belongs to the archaeal Rpo3/eukaryotic RPB3 RNA polymerase subunit family. Part of the RNA polymerase complex. Requires [3Fe-4S] cluster as cofactor.

The protein resides in the cytoplasm. The catalysed reaction is RNA(n) + a ribonucleoside 5'-triphosphate = RNA(n+1) + diphosphate. DNA-dependent RNA polymerase (RNAP) catalyzes the transcription of DNA into RNA using the four ribonucleoside triphosphates as substrates. The polypeptide is DNA-directed RNA polymerase subunit Rpo3 (Methanobrevibacter smithii (strain ATCC 35061 / DSM 861 / OCM 144 / PS)).